Reading from the N-terminus, the 348-residue chain is Ferredoxin--NADP reductase (348 aa).

Residues T25, E44, Q52, Y57, V97, F132, D298, and S339 each coordinate FAD.

It belongs to the ferredoxin--NADP reductase type 2 family. As to quaternary structure, homodimer. FAD is required as a cofactor.

The catalysed reaction is 2 reduced [2Fe-2S]-[ferredoxin] + NADP(+) + H(+) = 2 oxidized [2Fe-2S]-[ferredoxin] + NADPH. The polypeptide is Ferredoxin--NADP reductase (Chlorobium phaeobacteroides (strain BS1)).